The following is a 153-amino-acid chain: D-amino acid oxidase regulator (153 aa).

Residues 1-25 (MLEKLMGADSLQLFRSRYTLGKIYF) are involved in targeting to the mitochondrion. Residues 138-153 (KDQSCNHKEITSTKAE) are interaction with DAO.

As to quaternary structure, interacts with DAO (D-amino acid oxidase); the interaction is direct, can occur in the presence or absence of FAD or substrate bound to DAO, and results in a complex containing two DAO homodimers and two DAOA monomers. Interacts with DDO (D-aspartate oxidase); the interaction is direct. Interacts wih SOD1; the interaction is direct. Interacts with MSRB2; the interaction is direct. In terms of tissue distribution, expressed in the amygdala and in astrocytes of the cortex (at protein level). Expressed in the caudate nucleus, spinal cord and testis.

The protein localises to the cytoplasm. It is found in the cytosol. The protein resides in the golgi apparatus. It localises to the mitochondrion. May suppress DAO (D-amino acid oxidase) and SOD1 activity and promote their degradation. Has conversely also been suggested to function as a DAO activator. May stimulate the degradation of DDO (D-aspartate oxidase). May play a role in mitochondrial fission. This is D-amino acid oxidase regulator (DAOA) from Homo sapiens (Human).